Reading from the N-terminus, the 652-residue chain is Threonine--tRNA ligase (652 aa).

Residues 1-64 form the TGS domain; that stretch reads MPDVIRITFP…HEDGELVIIT (64 aa). A catalytic region spans residues 245–542; the sequence is DHRKLGKELE…LIEEYKGAFP (298 aa). Zn(2+) is bound by residues C338, H389, and H519.

It belongs to the class-II aminoacyl-tRNA synthetase family. As to quaternary structure, homodimer. Zn(2+) serves as cofactor.

Its subcellular location is the cytoplasm. The enzyme catalyses tRNA(Thr) + L-threonine + ATP = L-threonyl-tRNA(Thr) + AMP + diphosphate + H(+). Catalyzes the attachment of threonine to tRNA(Thr) in a two-step reaction: L-threonine is first activated by ATP to form Thr-AMP and then transferred to the acceptor end of tRNA(Thr). Also edits incorrectly charged L-seryl-tRNA(Thr). This chain is Threonine--tRNA ligase, found in Geobacillus kaustophilus (strain HTA426).